Reading from the N-terminus, the 368-residue chain is RING finger protein 32 (368 aa).

The segment at 45-82 (RKKEKKSKSLKRDATAIIDTGLRKSTEGPNMEDPEKEY) is disordered. The RING-type 1; atypical zinc-finger motif lies at 129–171 (CPICKEEFELHPQVLLSCSHVFHRACLQAFEKFTNKKTCPLCR). Positions 188–217 (RVKCATRIQAYWRGYIVRKWYRNLRKIIPP) constitute an IQ domain. Residues 295-358 (CSICLTPLSF…APFHVCPLCR (64 aa)) form an RING-type 2; atypical zinc finger.

It is found in the cytoplasm. Functionally, may play a role in sperm formation. The polypeptide is RING finger protein 32 (Rnf32) (Mus musculus (Mouse)).